The primary structure comprises 1217 residues: Endonuclease YhcR (1217 aa).

Positions 1–46 (MLSVEMISRQNRCHYVYKGGNMMRRILHIVLITALMFLNVMYTFEA) are cleaved as a signal peptide. Positions 376 to 517 (GEYEGIVDRV…KKDQKGIWNE (142 aa)) constitute a TNase-like domain. Active-site residues include arginine 404, glutamate 412, and arginine 460. The interval 590 to 828 (LRILSMNDLH…VIFAAHNHQV (239 aa)) is phosphoesterase. Residues aspartate 597, histidine 599, aspartate 647, asparagine 680, histidine 792, and histidine 824 each coordinate a divalent metal cation. The interval 829–1085 (VNGEVNGKLI…AYTKEGRIKL (257 aa)) is 5'-nucleotidase. Substrate contacts are provided by residues phenylalanine 965 and 1035–1042 (FMATATGA). A disordered region spans residues 1087-1142 (EASDIEDPVTEDPITEEPGDDPGTEDPIKEDPRPGEDLPDIKETPGTAPVHQLPPS). Positions 1089-1110 (SDIEDPVTEDPITEEPGDDPGT) are enriched in acidic residues. Residues 1112–1129 (DPIKEDPRPGEDLPDIKE) show a composition bias toward basic and acidic residues. An LPXTG sorting signal motif is present at residues 1182–1186 (LPDTS). Threonine 1185 is subject to Pentaglycyl murein peptidoglycan amidated threonine. The propeptide at 1186–1217 (SAGYYNFMVIGAAVTLSGTYLYVRRKRSASRT) is removed by sortase.

It in the C-terminal section; belongs to the 5'-nucleotidase family. Requires Ca(2+) as cofactor. Mn(2+) serves as cofactor.

Its subcellular location is the secreted. The protein resides in the cell wall. Requires a minimum of 0.1 mM of calcium for a significant activity. Maximal activity was observed with concentrations of calcium between 1 to 5 mM. Is 10-fold less active with the corresponding concentrations of manganese. Inhibited by NaCl at concentrations of 100 mM and higher. In terms of biological role, sugar-nonspecific endonuclease that yields nucleotide 3'-monophosphate products. No 5'-nucleotidase activity was detected, using 5'-AMP as the substrate, in the presence of diverse divalent metals and with various pH values. This is Endonuclease YhcR (yhcR) from Bacillus subtilis (strain 168).